Reading from the N-terminus, the 314-residue chain is Secreted frizzled-related protein 5 (314 aa).

The first 21 residues, 1 to 21 (MWVAWSARTAALALLLGALHG), serve as a signal peptide directing secretion. The region spanning 45 to 162 (SKPPQCLDIP…PLDNDLCIAV (118 aa)) is the FZ domain. Disulfide bonds link C50-C113, C60-C106, C97-C132, C121-C159, C125-C149, C178-C250, C181-C252, and C195-C300. The region spanning 178 to 300 (CAQCEMEHSA…AVKFMFSYPC (123 aa)) is the NTR domain.

This sequence belongs to the secreted frizzled-related protein (sFRP) family.

The protein resides in the secreted. Soluble frizzled-related proteins (sFRPS) function as modulators of Wnt signaling through direct interaction with Wnts. They have a role in regulating cell growth and differentiation in specific cell types. SFRP5 may be involved in determining the polarity of photoreceptor, and perhaps, other cells in the retina. This Mus musculus (Mouse) protein is Secreted frizzled-related protein 5 (Sfrp5).